Consider the following 92-residue polypeptide: Small ribosomal subunit protein uS19c (92 aa).

Belongs to the universal ribosomal protein uS19 family.

The protein localises to the plastid. It is found in the chloroplast. Its function is as follows. Protein S19 forms a complex with S13 that binds strongly to the 16S ribosomal RNA. The polypeptide is Small ribosomal subunit protein uS19c (Chaetosphaeridium globosum (Charophycean green alga)).